The following is a 549-amino-acid chain: Alanine aminotransferase 2-like (549 aa).

Lys-367 bears the N6-(pyridoxal phosphate)lysine mark.

Belongs to the class-I pyridoxal-phosphate-dependent aminotransferase family. Alanine aminotransferase subfamily. In terms of assembly, homodimer. Pyridoxal 5'-phosphate is required as a cofactor.

The catalysed reaction is L-alanine + 2-oxoglutarate = pyruvate + L-glutamate. The protein operates within amino-acid degradation; L-alanine degradation via transaminase pathway; pyruvate from L-alanine: step 1/1. Catalyzes the reversible transamination between alanine and 2-oxoglutarate to form pyruvate and glutamate. In Danio rerio (Zebrafish), this protein is Alanine aminotransferase 2-like (gpt2l).